The chain runs to 142 residues: Hemoglobin subunit alpha-1 (142 aa).

The Globin domain maps to 2 to 142 (VLSADDKSNV…VSTVLTSKYR (141 aa)). Residue H59 coordinates O2. A heme b-binding site is contributed by H88.

It belongs to the globin family. Heterotetramer of two alpha chains and two beta chains. In terms of tissue distribution, red blood cells.

Its function is as follows. Involved in oxygen transport from the lung to the various peripheral tissues. Functionally, hemopressin acts as an antagonist peptide of the cannabinoid receptor CNR1. Hemopressin-binding efficiently blocks cannabinoid receptor CNR1 and subsequent signaling. In Equus quagga burchellii (Burchell's zebra), this protein is Hemoglobin subunit alpha-1 (HBA1).